Consider the following 70-residue polypeptide: Protease inhibitor HPI (70 aa).

An N-acetylalanine modification is found at A2. Position 5 is an S-glutathionyl cysteine; alternate (C5).

The protein belongs to the protease inhibitor I13 (potato type I serine protease inhibitor) family. Monomer and homodimer; disulfide-linked. Occurs in 3 forms that differ in the modification of Cys-5, HPI-1 forms a homodimer through a disulfide bond, HPI-2a is modified by glutathionylation, and HPI-2b is covalently modified by addition of an unidentified adduct but not by a disulfide linkage.

Inhibitor of serine proteases, strongly inhibits subtilisin A and weakly inhibits trypsin. Does not inhibit chymotrypsin, papain, pepsin, pronase E, protease type XIII and thermolysin. HPI-1 inhibits subtilisin A with an Ki of 0.21 nM. HPI-2a inhibits subtilisin A with an Ki of 0.08 nM. HPI-2b inhibits subtilisin A with an Ki of 0.1 nM. The polypeptide is Protease inhibitor HPI (Hevea brasiliensis (Para rubber tree)).